A 277-amino-acid polypeptide reads, in one-letter code: Probable endonuclease 4 (277 aa).

Zn(2+)-binding residues include histidine 69, histidine 109, glutamate 145, aspartate 179, histidine 182, histidine 214, aspartate 227, histidine 229, and glutamate 259.

It belongs to the AP endonuclease 2 family. It depends on Zn(2+) as a cofactor.

The enzyme catalyses Endonucleolytic cleavage to 5'-phosphooligonucleotide end-products.. Endonuclease IV plays a role in DNA repair. It cleaves phosphodiester bonds at apurinic or apyrimidinic (AP) sites, generating a 3'-hydroxyl group and a 5'-terminal sugar phosphate. The protein is Probable endonuclease 4 of Bacteroides thetaiotaomicron (strain ATCC 29148 / DSM 2079 / JCM 5827 / CCUG 10774 / NCTC 10582 / VPI-5482 / E50).